The primary structure comprises 45 residues: Osteocalcin (45 aa).

One can recognise a Gla domain in the interval 1-41; it reads AAGELTLTQLESLREVCEANLACEDMMDAQGIIAAYTAYYG. Ca(2+) contacts are provided by E11, E15, E18, and E24. E11, E15, and E18 each carry 4-carboxyglutamate. A disulfide bridge connects residues C17 and C23.

It belongs to the osteocalcin/matrix Gla protein family. In terms of processing, gamma-carboxyglutamate residues are formed by vitamin K dependent carboxylation by GGCX. These residues are essential for the binding of calcium. As to expression, also found in smaller quantities in dentin.

The protein resides in the secreted. In terms of biological role, the carboxylated form is one of the main organic components of the bone matrix, which constitutes 1-2% of the total bone protein. The carboxylated form binds strongly to apatite and calcium. This Lepomis macrochirus (Bluegill) protein is Osteocalcin (bglap).